A 328-amino-acid polypeptide reads, in one-letter code: MSQATAKVNREVQAFLQDLKGKTIDHVFFVACGGSSAIMYPSKYVFDRESKSINSDLYSANEFIQRNPVQLGEKSLVILCSHSGNTPETVKAAAFARGKGALTIAMTFKPESPLAQEAQYVAQYDWGDEALAINTNYGVLYQIVFGTLQVLENNTKFEQAIEGLDQLQAVYEKALKQEADNAKQFAKAHEKESIIYTMASGANYGVAYSYSICILMEMQWIHSHAIHAGEYFHGPFEIIDESVPFIILLGLDETRPLEERALTFSKKYGKKLTVLDAASYDFTAIDDSVKGYLAPLVLNRVLRSYADELAEERNHPLSHRRYMWKVEY.

2 consecutive SIS domains span residues 15 to 153 (FLQD…VLEN) and 181 to 311 (NAKQ…ELAE).

As to quaternary structure, homooctamer.

In terms of biological role, catalyzes the conversion of a range of fructosamine 6-phosphates to glucose 6-phosphate and a free amino acid. The polypeptide is Fructosamine deglycase FrlB (frlB) (Bacillus subtilis (strain 168)).